Consider the following 300-residue polypeptide: tRNA dimethylallyltransferase 2 (300 aa).

13–20 provides a ligand contact to ATP; that stretch reads GPTGVGKT. 15–20 provides a ligand contact to substrate; sequence TGVGKT. An interaction with substrate tRNA region spans residues 38–41; it reads DSRQ.

It belongs to the IPP transferase family. Monomer. The cofactor is Mg(2+).

It catalyses the reaction adenosine(37) in tRNA + dimethylallyl diphosphate = N(6)-dimethylallyladenosine(37) in tRNA + diphosphate. Functionally, catalyzes the transfer of a dimethylallyl group onto the adenine at position 37 in tRNAs that read codons beginning with uridine, leading to the formation of N6-(dimethylallyl)adenosine (i(6)A). The sequence is that of tRNA dimethylallyltransferase 2 from Porphyromonas gingivalis (strain ATCC 33277 / DSM 20709 / CIP 103683 / JCM 12257 / NCTC 11834 / 2561).